We begin with the raw amino-acid sequence, 312 residues long: Heme oxygenase 2 (312 aa).

At serine 2 the chain carries N-acetylserine. Phosphoserine is present on serine 2. Histidine 41 is a heme b binding site. 2 HRM repeats span residues 260-265 and 277-282; these read KCPYYA and SCPFRA. Residues cysteine 261 and cysteine 278 each carry the S-nitrosocysteine modification.

The protein belongs to the heme oxygenase family. In terms of processing, S-nitrosylated by BLVRB.

It localises to the microsome. Its subcellular location is the endoplasmic reticulum. It catalyses the reaction heme b + 3 reduced [NADPH--hemoprotein reductase] + 3 O2 = biliverdin IXalpha + CO + Fe(2+) + 3 oxidized [NADPH--hemoprotein reductase] + 3 H2O + H(+). Heme oxygenase cleaves the heme ring at the alpha methene bridge to form biliverdin. Biliverdin is subsequently converted to bilirubin by biliverdin reductase. Under physiological conditions, the activity of heme oxygenase is highest in the spleen, where senescent erythrocytes are sequestrated and destroyed. Heme oxygenase 2 could be implicated in the production of carbon monoxide in brain where it could act as a neurotransmitter. The polypeptide is Heme oxygenase 2 (HMOX2) (Oryctolagus cuniculus (Rabbit)).